The chain runs to 220 residues: ATP-dependent dethiobiotin synthetase BioD (220 aa).

11 to 16 lines the ATP pocket; it reads GVGKTF. Residue Thr15 participates in Mg(2+) binding. Lys36 is a catalytic residue. Substrate is bound at residue Thr40. ATP-binding positions include Asp48 and 107-110; that span reads EGAG. Residues Asp48 and Glu107 each contribute to the Mg(2+) site.

It belongs to the dethiobiotin synthetase family. Homodimer. Requires Mg(2+) as cofactor.

The protein localises to the cytoplasm. The catalysed reaction is (7R,8S)-7,8-diammoniononanoate + CO2 + ATP = (4R,5S)-dethiobiotin + ADP + phosphate + 3 H(+). Its pathway is cofactor biosynthesis; biotin biosynthesis; biotin from 7,8-diaminononanoate: step 1/2. Its function is as follows. Catalyzes a mechanistically unusual reaction, the ATP-dependent insertion of CO2 between the N7 and N8 nitrogen atoms of 7,8-diaminopelargonic acid (DAPA, also called 7,8-diammoniononanoate) to form a ureido ring. The polypeptide is ATP-dependent dethiobiotin synthetase BioD (Aquifex aeolicus (strain VF5)).